The primary structure comprises 228 residues: Histidine decarboxylase (228 aa).

Residue H30 participates in substrate binding. K143 carries the N6-(pyridoxal phosphate)lysine modification.

This sequence belongs to the group II decarboxylase family. Homotetramer. The cofactor is pyridoxal 5'-phosphate.

The enzyme catalyses L-histidine + H(+) = histamine + CO2. This is Histidine decarboxylase (hdc) from Raoultella ornithinolytica (Klebsiella ornithinolytica).